The following is a 321-amino-acid chain: Cytochrome c biogenesis protein CcsA (321 aa).

The next 7 helical transmembrane spans lie at I9–L29, G44–G64, L68–I88, M143–I163, V225–N245, T259–H273, and V288–I308.

Belongs to the CcmF/CycK/Ccl1/NrfE/CcsA family. May interact with Ccs1.

It localises to the plastid. Its subcellular location is the chloroplast thylakoid membrane. Required during biogenesis of c-type cytochromes (cytochrome c6 and cytochrome f) at the step of heme attachment. The sequence is that of Cytochrome c biogenesis protein CcsA from Saccharum hybrid (Sugarcane).